The following is a 1113-amino-acid chain: Atrial natriuretic peptide-converting enzyme (1113 aa).

The Cytoplasmic segment spans residues Met1–Arg112. The helical; Signal-anchor for type II membrane protein transmembrane segment at Phe113 to Leu133 threads the bilayer. At Ser134 to Gly1113 the chain is on the extracellular side. 3 N-linked (GlcNAc...) asparagine glycosylation sites follow: Asn147, Asn202, and Asn208. The interval Ala176–Asn202 is disordered. The FZ 1 domain maps to Arg201–Leu327. 8 disulfide bridges follow: Cys206–Cys266, Cys214–Cys259, Cys250–Cys290, Cys279–Cys324, Cys283–Cys307, Cys337–Cys350, Cys345–Cys363, and Cys357–Cys372. 2 N-linked (GlcNAc...) asparagine glycosylation sites follow: Asn298 and Asn317. LDL-receptor class A domains are found at residues Leu336 to Cys372, Asn373 to Cys408, Asp409 to Cys445, and Ser446 to Ser483. Asn373 carries an N-linked (GlcNAc...) asparagine glycan. Intrachain disulfides connect Cys374/Cys386, Cys381/Cys399, Cys393/Cys408, Cys410/Cys423, Cys418/Cys436, Cys430/Cys445, Cys447/Cys460, Cys455/Cys473, and Cys467/Cys482. N-linked (GlcNAc...) asparagine glycosylation occurs at Asn411. The N-linked (GlcNAc...) asparagine glycan is linked to Asn444. Residues Asn481, Asn519, and Asn537 are each glycosylated (N-linked (GlcNAc...) asparagine). Residues Ser518–Pro641 enclose the FZ 2 domain. Cystine bridges form between Cys523/Cys586, Cys531/Cys579, Cys570/Cys608, Cys597/Cys638, Cys601/Cys625, Cys648/Cys660, Cys655/Cys673, Cys667/Cys682, Cys684/Cys698, Cys692/Cys711, Cys705/Cys720, Cys723/Cys735, Cys730/Cys748, and Cys742/Cys757. A glycan (N-linked (GlcNAc...) asparagine) is linked at Asn635. 3 consecutive LDL-receptor class A domains span residues Glu647–Cys682, Gly683–Ser721, and Phe722–Cys757. Asn719 is a glycosylation site (N-linked (GlcNAc...) asparagine). In terms of domain architecture, SRCR spans Val758–Ser853. Residues Asn765 and Asn828 are each glycosylated (N-linked (GlcNAc...) asparagine). Cystine bridges form between Cys782–Cys884, Cys857–Cys979, Cys895–Cys911, Cys993–Cys1058, Cys1022–Cys1037, and Cys1048–Cys1077. The region spanning Ile869 to Tyr1102 is the Peptidase S1 domain. Catalysis depends on charge relay system residues His910 and Asp959. A glycan (N-linked (GlcNAc...) asparagine) is linked at Asn970. Residue Ser1052 is the Charge relay system of the active site. N-linked (GlcNAc...) asparagine glycosylation occurs at Asn1089.

The protein belongs to the peptidase S1 family. In terms of processing, N-glycosylated; required for processing and activation. Activated through proteolytic processing by a trypsin-like protease; cleaved into a N-terminal propeptide and an activated corin protease fragment. Atrial natriuretic peptide-converting enzyme, 180 kDa soluble fragment is produced by cleavage by ADAM10. Cleavage by ADAM10 to produce soluble 180 kDa soluble fragment takes place after the transmembrane region and before FZ 1. Post-translationally, a disulfide bond links the activated corin protease fragment and the N-terminal propeptide. The disulfide bond also links the activated corin protease fragment with Atrial natriuretic peptide-converting enzyme, 180 kDa soluble fragment. As to expression, highly expressed in heart. Also expressed in pregnant uterus.

The protein resides in the cell membrane. It localises to the secreted. Its function is as follows. Serine-type endopeptidase involved in atrial natriuretic peptide (NPPA) processing. Converts through proteolytic cleavage the non-functional propeptide NPPA into the active hormone, thereby regulating blood pressure in heart and promoting natriuresis, diuresis and vasodilation. Proteolytic cleavage of pro-NPPA also plays a role in female pregnancy by promoting trophoblast invasion and spiral artery remodeling in uterus. Also acts as a regulator of sodium reabsorption in kidney. May also process pro-NPPB the B-type natriuretic peptide. This chain is Atrial natriuretic peptide-converting enzyme (Corin), found in Mus musculus (Mouse).